Consider the following 279-residue polypeptide: DegV domain-containing protein CPE1310 (279 aa).

The DegV domain maps to 4-277 (IKIITDSTCD…PKVCALFYVE (274 aa)). Hexadecanoate contacts are provided by threonine 62 and serine 94.

Functionally, may bind long-chain fatty acids, such as palmitate, and may play a role in lipid transport or fatty acid metabolism. In Clostridium perfringens (strain 13 / Type A), this protein is DegV domain-containing protein CPE1310.